The sequence spans 505 residues: Activin receptor type-1B (505 aa).

An N-terminal signal peptide occupies residues 1-23 (MAESAGASSFFPLVVLLLAGSGG). The Extracellular portion of the chain corresponds to 24–126 (SGPRGIQALL…AHPSMWGPVE (103 aa)). An N-linked (GlcNAc...) asparagine glycan is attached at Asn43. A helical membrane pass occupies residues 127-149 (LVGIIAGPVFLLFLIIIIVFLVI). At 150–505 (NYHQRVYHNR…QLSVQEDVKI (356 aa)) the chain is on the cytoplasmic side. A GS domain is found at 177–206 (KTLQDLVYDLSTSGSGSGLPLFVQRTVART). The 291-residue stretch at 207–497 (IVLQEIIGKG…LRIKKTLSQL (291 aa)) folds into the Protein kinase domain. ATP contacts are provided by residues 213–221 (IGKGRFGEV) and Lys234. Residue Asp335 is the Proton acceptor of the active site. A Phosphotyrosine modification is found at Tyr380.

The protein belongs to the protein kinase superfamily. TKL Ser/Thr protein kinase family. TGFB receptor subfamily. As to quaternary structure, forms an activin receptor complex with activin receptor type-2 (ACVR2A or ACVR2B). Part of a complex consisting of MAGI2/ARIP1, ACVR2A, ACVR1B and SMAD3. Interacts with SMAD2 and SMAD3. Interacts with SMAD7. Interacts with FKBP1A. Interacts with IGSF1. Interacts with CRIPTO. Interacts with TDP2. Interacts with TSC22D1/TSC-22. Autophosphorylated. Phosphorylated by activin receptor type-2 (ACVR2A or ACVR2B) in response to activin-binding at serine and threonine residues in the GS domain. Phosphorylation of ACVR1B by activin receptor type-2 regulates association with SMAD7. Post-translationally, ubiquitinated. Level of ubiquitination is regulated by the SMAD7-SMURF1 complex. In terms of processing, ubiquitinated.

Its subcellular location is the cell membrane. It catalyses the reaction L-threonyl-[receptor-protein] + ATP = O-phospho-L-threonyl-[receptor-protein] + ADP + H(+). It carries out the reaction L-seryl-[receptor-protein] + ATP = O-phospho-L-seryl-[receptor-protein] + ADP + H(+). Activin receptor type-2 (ACVR2A or ACVR2B) activates the type-1 receptor through phosphorylation of its regulatory GS domain. In terms of biological role, transmembrane serine/threonine kinase activin type-1 receptor forming an activin receptor complex with activin receptor type-2 (ACVR2A or ACVR2B). Transduces the activin signal from the cell surface to the cytoplasm and is thus regulating a many physiological and pathological processes including neuronal differentiation and neuronal survival, hair follicle development and cycling, FSH production by the pituitary gland, wound healing, extracellular matrix production, immunosuppression and carcinogenesis. Activin is also thought to have a paracrine or autocrine role in follicular development in the ovary. Within the receptor complex, type-2 receptors (ACVR2A and/or ACVR2B) act as a primary activin receptors whereas the type-1 receptors like ACVR1B act as downstream transducers of activin signals. Activin binds to type-2 receptor at the plasma membrane and activates its serine-threonine kinase. The activated receptor type-2 then phosphorylates and activates the type-1 receptor such as ACVR1B. Once activated, the type-1 receptor binds and phosphorylates the SMAD proteins SMAD2 and SMAD3, on serine residues of the C-terminal tail. Soon after their association with the activin receptor and subsequent phosphorylation, SMAD2 and SMAD3 are released into the cytoplasm where they interact with the common partner SMAD4. This SMAD complex translocates into the nucleus where it mediates activin-induced transcription. Inhibitory SMAD7, which is recruited to ACVR1B through FKBP1A, can prevent the association of SMAD2 and SMAD3 with the activin receptor complex, thereby blocking the activin signal. Activin signal transduction is also antagonized by the binding to the receptor of inhibin-B via the IGSF1 inhibin coreceptor. ACVR1B also phosphorylates TDP2. The chain is Activin receptor type-1B (Acvr1b) from Mus musculus (Mouse).